The sequence spans 834 residues: Sodium/hydrogen exchanger 3 (834 aa).

The signal sequence occupies residues 1–25; sequence MWGLGARGPDRGLLLALALGGLARA. At 26-51 the chain is on the extracellular side; sequence GGVEVEPGGAHGESGGFQVVTFEWAH. Residues 52–74 traverse the membrane as a helical segment; sequence VQDPYVIALWILVASLAKIGFHL. Residues 75 to 82 lie on the Cytoplasmic side of the membrane; it reads SHKVTSVV. The helical transmembrane segment at 83–102 threads the bilayer; the sequence is PESALLIVLGLVLGGIVWAA. Topologically, residues 103–111 are extracellular; sequence DHIASFTLT. The helical transmembrane segment at 112 to 129 threads the bilayer; it reads PTVFFFYLLPPIVLDAGY. Over 130 to 132 the chain is Cytoplasmic; that stretch reads FMP. A helical membrane pass occupies residues 133–168; the sequence is NRLFFGNLGTILLYAVVGTVWNAATTGLSLYGVFLS. The a 1,2-diacyl-sn-glycero-3-phospho-(1D-myo-inositol) site is built by Gly138, Gly141, and Thr142. Topologically, residues 169–181 are extracellular; it reads GLMGDLQIGLLDF. A helical transmembrane segment spans residues 182 to 203; that stretch reads LLFGSLMAAVDPVAVLAVFEEV. Residues 204–205 lie on the Cytoplasmic side of the membrane; sequence HV. A helical transmembrane segment spans residues 206–237; that stretch reads NEVLFIIVFGESLLNDAVTVVLYNVFESFVAL. The Extracellular segment spans residues 238–244; that stretch reads GGDNVTG. Asn241 is a glycosylation site (N-linked (GlcNAc...) asparagine). Residues 245–279 traverse the membrane as a helical segment; it reads VDCVKGIVSFFVVSLGGTLVGVVFAFLLSLVTRFT. Over 280 to 281 the chain is Cytoplasmic; the sequence is KH. The helical transmembrane segment at 282–304 threads the bilayer; the sequence is VRIIEPGFVFIISYLSYLTSEML. Over 305-306 the chain is Extracellular; it reads SL. Residues 307-323 form a helical membrane-spanning segment; the sequence is SAILAITFCGICCQKYV. The Cytoplasmic segment spans residues 324–330; that stretch reads KANISEQ. A helical transmembrane segment spans residues 331–359; it reads SATTVRYTMKMLASSAETIIFMFLGISAV. The Extracellular portion of the chain corresponds to 360-367; it reads NPFIWTWN. A helical membrane pass occupies residues 368–389; that stretch reads TAFVLLTLVFISVYRAIGVVLQ. Residues 390-402 lie on the Cytoplasmic side of the membrane; the sequence is TWLLNRYRMVQLE. Met398 is an a 1,2-diacyl-sn-glycero-3-phospho-(1D-myo-inositol) binding site. The chain crosses the membrane as a helical span at residues 403-426; it reads PIDQVVLSYGGLRGAVAFALVVLL. The Extracellular segment spans residues 427 to 433; the sequence is DGDKVKE. The chain crosses the membrane as a helical span at residues 434 to 467; it reads KNLFVSTTIIVVFFTVIFQGLTIKPLVQWLKVKR. At 468–834 the chain is on the cytoplasmic side; the sequence is SEHREPRLNE…PAALPESTHM (367 aa). A 1,2-diacyl-sn-glycero-3-phospho-(1D-myo-inositol) contacts are provided by Gln497, Ile498, and His500. Ser555 and Ser563 each carry phosphoserine. The tract at residues 575 to 589 is interaction with EZR; sequence RSSTVEASVSYLLRE. The tract at residues 590–667 is interaction with NHERF4; it reads NVSAVCLDMQ…RKRLESFKST (78 aa). Positions 591 to 695 are interaction with AHCYL1; sequence VSAVCLDMQS…AQKRRNSSIP (105 aa). A phosphoserine mark is found at Ser592 and Ser607. Ser663 carries the post-translational modification Phosphoserine; by SGK1. The span at 679-691 shows a compositional bias: basic residues; sequence KLYKRERAQKRRN. The disordered stretch occupies residues 679–728; the sequence is KLYKRERAQKRRNSSIPNGKLPMESPAQNFTIKEKDLELSDTEEPPNYDE. The segment covering 717-728 has biased composition (acidic residues); sequence LSDTEEPPNYDE. Phosphoserine occurs at positions 718, 810, and 813. The segment at 814-834 is disordered; the sequence is FLQADGPEERPPAALPESTHM.

The protein belongs to the monovalent cation:proton antiporter 1 (CPA1) transporter (TC 2.A.36) family. Homodimer. Found in the forms of complex and dynamic macromolecular complexes. Binds NHERF1 and NHERF2. Interacts with CHP1; increases SLC9A3 trafficking and activity at the plasma membrane. Interacts with CHP2 and SHANK2. Interacts with PDZK1 (via C-terminal PDZ domain). Interacts with NHERF4 and interaction decrease in response to elevated calcium ion levels. Interacts with AHCYL1; the interaction is required for SLC9A3 activity. Interacts with SNX27 (via PDZ domains); directs SLC9A3 membrane insertion from early endosomes to the plasma membrane. Interacts with EZR; interaction targets SLC9A3 to the apical membrane. Post-translationally, phosphorylated by PKA, which inhibits activity. Phosphorylation at Ser-663 by SGK1 is associated with increased abundance at the cell membrane. Phosphorylation at Ser-718 by CSNK2A1 regulates SLC9A3 activity through the formation of multiple signaling complexes.

It localises to the apical cell membrane. Its subcellular location is the cell membrane. The protein resides in the recycling endosome membrane. It is found in the early endosome membrane. The enzyme catalyses Na(+)(in) + H(+)(out) = Na(+)(out) + H(+)(in). With respect to regulation, seems to switch between active and inactive modes in response to various stimuli. Activated directly or indirectly by membrane phosphatidylinositol (PIs). Regulated by a variety of auxiliary proteins, which facilitate the maturation, cell surface expression and function of the transporter. Inhibited specifically by the drug tenapanor. In terms of biological role, plasma membrane Na(+)/H(+) antiporter. Exchanges intracellular H(+) ions for extracellular Na(+) in 1:1 stoichiometry, playing a key role in salt and fluid absorption and pH homeostasis. Major apical Na(+)/H(+) exchanger in kidney and intestine playing an important role in renal and intestine Na(+) absorption and blood pressure regulation. This Homo sapiens (Human) protein is Sodium/hydrogen exchanger 3.